The chain runs to 512 residues: tRNA modification GTPase gtpbp3, mitochondrial (512 aa).

The region spanning 246–434 (GANIAIVGPP…LLNLLKLNLK (189 aa)) is the TrmE-type G domain. GTP is bound by residues 253–260 (GPPNAGKS), 300–304 (DTAGL), and 375–378 (NKSD).

It belongs to the TRAFAC class TrmE-Era-EngA-EngB-Septin-like GTPase superfamily. TrmE GTPase family.

It is found in the mitochondrion. In terms of biological role, GTPase involved in the 5-carboxymethylaminomethyl modification (mnm(5)s(2)U34) of the wobble uridine base in mitochondrial tRNAs. The protein is tRNA modification GTPase gtpbp3, mitochondrial (gtpbp3) of Dictyostelium discoideum (Social amoeba).